A 572-amino-acid polypeptide reads, in one-letter code: Glypican-5 (572 aa).

The first 24 residues, 1–24, serve as a signal peptide directing secretion; that stretch reads MDAQTWPVGFRCLLLLALVGSARS. N-linked (GlcNAc...) asparagine glycosylation is found at Asn120 and Asn237. Residues 355-375 are disordered; sequence SPRCSFDQSKEKHGMKTTTRN. Residues Ser441, Ser486, Ser495, Ser507, and Ser509 are each glycosylated (O-linked (Xyl...) (glycosaminoglycan) serine). N-linked (GlcNAc...) asparagine glycosylation is present at Asn527.

Belongs to the glypican family. In terms of tissue distribution, in adult, primarily expressed in the brain. Also detected in fetal brain, lung and liver.

Its subcellular location is the cell membrane. It localises to the secreted. The protein localises to the extracellular space. Cell surface proteoglycan that bears heparan sulfate. This Homo sapiens (Human) protein is Glypican-5 (GPC5).